Here is a 156-residue protein sequence, read N- to C-terminus: MPRRRVVGQRKILPDPKFNSELLAKFINVIMQDGKKSTAEKIIYKALDTASEKKSEDHLVILEAALENVRPSVEVKSRRVGGSTYQVPCEVRPVRRNALGMRWLVEAARKRGEKSMALRLAGELLDASDNKGTAVKKREDVHRMAEANKAFAHYRW.

It belongs to the universal ribosomal protein uS7 family. As to quaternary structure, part of the 30S ribosomal subunit. Contacts proteins S9 and S11.

One of the primary rRNA binding proteins, it binds directly to 16S rRNA where it nucleates assembly of the head domain of the 30S subunit. Is located at the subunit interface close to the decoding center, probably blocks exit of the E-site tRNA. The sequence is that of Small ribosomal subunit protein uS7 from Shewanella sediminis (strain HAW-EB3).